The sequence spans 377 residues: Stimulator of interferon genes protein 7 (377 aa).

A run of 4 helical transmembrane segments spans residues 30-50 (TAAI…FLAV), 57-77 (THFL…GELL), 106-126 (FTFD…LILC), and 141-161 (FAIL…LVGL).

It belongs to the STING family.

The protein localises to the membrane. Its function is as follows. Facilitator of innate immune signaling that acts as a sensor of second messenger signals produced by cyclic GMP-AMP synthase-like receptors (cGLRs) and promotes the production of type I interferon. Innate immune response is triggered in response to nucleotides from viruses and bacteria delivered to the cytoplasm. Acts by binding cyclic dinucleotides: recognizes and binds a large variety of 2'-3'- and 3'-3' linked cyclic dinucleotides (2'-3'-cGAMP, 3'-3'-cGAMP, 2',3'-cUAMP, 3',3'-cUAMP and/or 3',3'-c-di-GMP) second messengers produced by cGLRs in response to nucleotides in the cytosol, such as double-stranded RNA (dsRNA). Upon binding to cyclic dinucleotides, oligomerizes and promotes the recruitment and subsequent activation of the transcription factor IRF3 to induce expression of type I interferon. The polypeptide is Stimulator of interferon genes protein 7 (Stylophora pistillata (Smooth cauliflower coral)).